Consider the following 118-residue polypeptide: Large ribosomal subunit protein bL20 (118 aa).

It belongs to the bacterial ribosomal protein bL20 family.

Binds directly to 23S ribosomal RNA and is necessary for the in vitro assembly process of the 50S ribosomal subunit. It is not involved in the protein synthesizing functions of that subunit. This Kosmotoga olearia (strain ATCC BAA-1733 / DSM 21960 / TBF 19.5.1) protein is Large ribosomal subunit protein bL20.